Here is a 132-residue protein sequence, read N- to C-terminus: Glycine cleavage system H protein (132 aa).

The region spanning 24 to 106 (IATIGLSAFA…YGDGWLIKVR (83 aa)) is the Lipoyl-binding domain. Lys-65 carries the N6-lipoyllysine modification.

The protein belongs to the GcvH family. In terms of assembly, the glycine cleavage system is composed of four proteins: P, T, L and H. (R)-lipoate is required as a cofactor.

In terms of biological role, the glycine cleavage system catalyzes the degradation of glycine. The H protein shuttles the methylamine group of glycine from the P protein to the T protein. In Rippkaea orientalis (strain PCC 8801 / RF-1) (Cyanothece sp. (strain PCC 8801)), this protein is Glycine cleavage system H protein.